We begin with the raw amino-acid sequence, 91 residues long: Teretoxin Tan22.13 (91 aa).

An N-terminal signal peptide occupies residues Met1 to Lys21. Residues Met22–Arg24 constitute a propeptide that is removed on maturation.

Belongs to the teretoxin C (TC) superfamily. Contains 4 disulfide bonds. As to expression, expressed by the venom duct.

It localises to the secreted. This is Teretoxin Tan22.13 from Terebra anilis (Auger snail).